Here is a 450-residue protein sequence, read N- to C-terminus: MAVHPIDYRYGSEEMRRVWEEENKLQKLLDVEAALARAHAKLGNIPEESARVISERANTKWVKLERVKEIEAEIHHDIMAVVKALSEVCGEHGKYVHLGATSNDIIDTANALLIKESLAIVEKDLKELRSILKELAKKHIDTVCIGRTHGQHAVPTTYGMKFALWLDEIQRHIERLQQLKDRVLVGKMRGAVGTAASFGDKAFEIEKLVMEDLGLKPARITNQIIQRDVYAELMFFLALVASTLDKMALEIRNLQRTEILEVSEPFGEKQVGSSTMPHKRNPIRTEKVCGLARVLYSNVIPALLNNPLWHERDLTNSSVERVILPESFVLLDEMLKVMKKVLKGLEFFPENIKRNLYLTKNLIMAEPLMLKLAEKGMGRQEAHELVRQLAMKAFKEGRDLLEVVRKNEEAMKYLTENDLEGLKPENYIGKAREIVENVVNYVEEMERRGL.

N(6)-(1,2-dicarboxyethyl)-AMP-binding positions include 9–10 (RY), 75–77 (HHD), and 101–102 (TS). His149 (proton donor/acceptor) is an active-site residue. Gln223 is a N(6)-(1,2-dicarboxyethyl)-AMP binding site. The Proton donor/acceptor role is filled by Ser273. N(6)-(1,2-dicarboxyethyl)-AMP contacts are provided by residues Ser274, 279 to 281 (KRN), and 318 to 322 (SVERV).

This sequence belongs to the lyase 1 family. Adenylosuccinate lyase subfamily. As to quaternary structure, homotetramer. Residues from neighboring subunits contribute catalytic and substrate-binding residues to each active site.

The enzyme catalyses N(6)-(1,2-dicarboxyethyl)-AMP = fumarate + AMP. It carries out the reaction (2S)-2-[5-amino-1-(5-phospho-beta-D-ribosyl)imidazole-4-carboxamido]succinate = 5-amino-1-(5-phospho-beta-D-ribosyl)imidazole-4-carboxamide + fumarate. It participates in purine metabolism; AMP biosynthesis via de novo pathway; AMP from IMP: step 2/2. Its pathway is purine metabolism; IMP biosynthesis via de novo pathway; 5-amino-1-(5-phospho-D-ribosyl)imidazole-4-carboxamide from 5-amino-1-(5-phospho-D-ribosyl)imidazole-4-carboxylate: step 2/2. Catalyzes two reactions in de novo purine nucleotide biosynthesis. Catalyzes the breakdown of 5-aminoimidazole- (N-succinylocarboxamide) ribotide (SAICAR or 2-[5-amino-1-(5-phospho-beta-D-ribosyl)imidazole-4-carboxamido]succinate) to 5-aminoimidazole-4-carboxamide ribotide (AICAR or 5-amino-1-(5-phospho-beta-D-ribosyl)imidazole-4-carboxamide) and fumarate, and of adenylosuccinate (ADS or N(6)-(1,2-dicarboxyethyl)-AMP) to adenosine monophosphate (AMP) and fumarate. The protein is Adenylosuccinate lyase (purB) of Pyrococcus abyssi (strain GE5 / Orsay).